Reading from the N-terminus, the 836-residue chain is Glutamate receptor ionotropic, kainate 1 (836 aa).

The N-terminal stretch at 1–30 is a signal peptide; it reads MERGTVLIQPGLWTRDTSWTLLYFLCYILP. Over 31–561 the chain is Extracellular; it reads QTSPQVLRIG…VFSFLNPLSP (531 aa). N-linked (GlcNAc...) asparagine glycans are attached at residues asparagine 68, asparagine 74, asparagine 276, asparagine 379, asparagine 413, asparagine 424, and asparagine 431. Residues proline 516, threonine 518, and arginine 523 each contribute to the L-glutamate site. N-linked (GlcNAc...) asparagine glycosylation occurs at asparagine 546. The chain crosses the membrane as a helical span at residues 562 to 582; that stretch reads DIWMYVLLACLGVSCVLFVIA. Residues 583-638 are Cytoplasmic-facing; the sequence is RFTPYEWYNPHPCNPDSDVVENNFTLLNSFWFGVGALMQQGSELMPKALSTRIVGG. The helical transmembrane segment at 639–659 threads the bilayer; sequence IWWFFTLIIISSYTANLAAFL. Topologically, residues 660 to 721 are extracellular; that stretch reads TVERMESPID…RQPSALGVEN (62 aa). L-glutamate contacts are provided by serine 689 and threonine 690. The helical transmembrane segment at 722-742 threads the bilayer; it reads IGGIFIVLAAGLVLSVFVAIG. At 743–836 the chain is on the cytoplasmic side; it reads EFIYKSRKNN…RRTQRKETVA (94 aa).

It belongs to the glutamate-gated ion channel (TC 1.A.10.1) family. GRIK1 subfamily. Homotetramer or heterotetramer of pore-forming glutamate receptor subunits. Tetramers may be formed by the dimerization of dimers. Can form functional heteromeric receptors with GRIK4 and GRIK5. Interacts with KLHL17. In terms of tissue distribution, most abundant in the cerebellum. Also present in the suprachiasmatic nuclei of the hypothalamus.

It is found in the cell membrane. The protein resides in the postsynaptic cell membrane. The catalysed reaction is Ca(2+)(in) = Ca(2+)(out). In terms of biological role, ionotropic glutamate receptor that functions as a cation-permeable ligand-gated ion channel, gated by L-glutamate and the glutamatergic agonist kainic acid. L-glutamate acts as an excitatory neurotransmitter at many synapses in the central nervous system. Binding of the excitatory neurotransmitter L-glutamate induces a conformation change, leading to the opening of the cation channel, and thereby converts the chemical signal to an electrical impulse. The receptor then desensitizes rapidly and enters a transient inactive state, characterized by the presence of bound agonist. This Mus musculus (Mouse) protein is Glutamate receptor ionotropic, kainate 1 (Grik1).